A 400-amino-acid chain; its full sequence is Lysophospholipid transporter LplT (400 aa).

12 helical membrane-spanning segments follow: residues 19–39 (VIVA…ATLA), 53–73 (VLQM…GQIA), 91–111 (AGAA…LVGI), 139–159 (MMEA…GVLA), 164–184 (IAAL…NLFI), 195–213 (SWRL…VVLW), 227–247 (LFWG…PVAL), 257–277 (YLNA…AKLV), 281–301 (TVSR…IFSL), 304–324 (ALLP…FFVV), 352–372 (NSAM…GVPA), and 373–393 (VAIG…LWIW).

The protein belongs to the major facilitator superfamily. LplT (TC 2.A.1.42) family.

The protein localises to the cell inner membrane. Its function is as follows. Catalyzes the facilitated diffusion of 2-acyl-glycero-3-phosphoethanolamine (2-acyl-GPE) into the cell. The chain is Lysophospholipid transporter LplT from Salmonella paratyphi B (strain ATCC BAA-1250 / SPB7).